The sequence spans 279 residues: Large ribosomal subunit protein uL2 (279 aa).

Residues 223-279 (VAMNPVDHPMGGGEGRSSGGHPRSRKGLYAKGGKTRSANKYSKNMIVKKRVNKRLSK) are disordered. The segment covering 268-279 (IVKKRVNKRLSK) has biased composition (basic residues).

Belongs to the universal ribosomal protein uL2 family. In terms of assembly, part of the 50S ribosomal subunit. Forms a bridge to the 30S subunit in the 70S ribosome.

In terms of biological role, one of the primary rRNA binding proteins. Required for association of the 30S and 50S subunits to form the 70S ribosome, for tRNA binding and peptide bond formation. It has been suggested to have peptidyltransferase activity; this is somewhat controversial. Makes several contacts with the 16S rRNA in the 70S ribosome. The chain is Large ribosomal subunit protein uL2 from Cytophaga hutchinsonii (strain ATCC 33406 / DSM 1761 / CIP 103989 / NBRC 15051 / NCIMB 9469 / D465).